Reading from the N-terminus, the 295-residue chain is Ribosomal RNA small subunit methyltransferase A (295 aa).

6 residues coordinate S-adenosyl-L-methionine: asparagine 31, leucine 33, glycine 58, glutamate 79, aspartate 104, and asparagine 129.

The protein belongs to the class I-like SAM-binding methyltransferase superfamily. rRNA adenine N(6)-methyltransferase family. RsmA subfamily.

It is found in the cytoplasm. It catalyses the reaction adenosine(1518)/adenosine(1519) in 16S rRNA + 4 S-adenosyl-L-methionine = N(6)-dimethyladenosine(1518)/N(6)-dimethyladenosine(1519) in 16S rRNA + 4 S-adenosyl-L-homocysteine + 4 H(+). Specifically dimethylates two adjacent adenosines (A1518 and A1519) in the loop of a conserved hairpin near the 3'-end of 16S rRNA in the 30S particle. May play a critical role in biogenesis of 30S subunits. This chain is Ribosomal RNA small subunit methyltransferase A, found in Leuconostoc mesenteroides subsp. mesenteroides (strain ATCC 8293 / DSM 20343 / BCRC 11652 / CCM 1803 / JCM 6124 / NCDO 523 / NBRC 100496 / NCIMB 8023 / NCTC 12954 / NRRL B-1118 / 37Y).